A 384-amino-acid polypeptide reads, in one-letter code: Chaperone protein DnaJ (384 aa).

The J domain occupies Asp6–Gly71. A CR-type zinc finger spans residues Gly141–Val223. The Zn(2+) site is built by Cys154, Cys157, Cys171, Cys174, Cys197, Cys200, Cys211, and Cys214. CXXCXGXG motif repeat units follow at residues Cys154–Gly161, Cys171–Gly178, Cys197–Gly204, and Cys211–Gly218.

It belongs to the DnaJ family. Homodimer. It depends on Zn(2+) as a cofactor.

The protein resides in the cytoplasm. Functionally, participates actively in the response to hyperosmotic and heat shock by preventing the aggregation of stress-denatured proteins and by disaggregating proteins, also in an autonomous, DnaK-independent fashion. Unfolded proteins bind initially to DnaJ; upon interaction with the DnaJ-bound protein, DnaK hydrolyzes its bound ATP, resulting in the formation of a stable complex. GrpE releases ADP from DnaK; ATP binding to DnaK triggers the release of the substrate protein, thus completing the reaction cycle. Several rounds of ATP-dependent interactions between DnaJ, DnaK and GrpE are required for fully efficient folding. Also involved, together with DnaK and GrpE, in the DNA replication of plasmids through activation of initiation proteins. The chain is Chaperone protein DnaJ from Clostridioides difficile (strain 630) (Peptoclostridium difficile).